Consider the following 565-residue polypeptide: Sulfite reductase [NADPH] hemoprotein beta-component (565 aa).

The [4Fe-4S] cluster site is built by Cys-429, Cys-435, Cys-474, and Cys-478. Cys-478 provides a ligand contact to siroheme.

It belongs to the nitrite and sulfite reductase 4Fe-4S domain family. Alpha(8)-beta(8). The alpha component is a flavoprotein, the beta component is a hemoprotein. Siroheme serves as cofactor. Requires [4Fe-4S] cluster as cofactor.

The catalysed reaction is hydrogen sulfide + 3 NADP(+) + 3 H2O = sulfite + 3 NADPH + 4 H(+). It participates in sulfur metabolism; hydrogen sulfide biosynthesis; hydrogen sulfide from sulfite (NADPH route): step 1/1. Functionally, component of the sulfite reductase complex that catalyzes the 6-electron reduction of sulfite to sulfide. This is one of several activities required for the biosynthesis of L-cysteine from sulfate. The polypeptide is Sulfite reductase [NADPH] hemoprotein beta-component (Shewanella baltica (strain OS155 / ATCC BAA-1091)).